The primary structure comprises 37 residues: Large ribosomal subunit protein bL36 (37 aa).

The protein belongs to the bacterial ribosomal protein bL36 family.

This Thermosynechococcus vestitus (strain NIES-2133 / IAM M-273 / BP-1) protein is Large ribosomal subunit protein bL36.